We begin with the raw amino-acid sequence, 275 residues long: MALVKVKPTSAGRRAVVKVVNKDLHKGAPYAPLLEKQIQNAGRNNNGHITTRHKGGGHKHHYRVVDFRRNKDGIVAKVERIEYDPNRTAHIALLCYADGERRYIIAPRGLKAGAEVVNGAEAPIKAGNCLPIRNIPVGTTIHCIEMQPGKGAQLARSAGASVMLLAREGSYAQLRLRSGEIRKVHIDCRATVGEVGNEEHSLRKLGKAGATRWRGIRPTVRGVAMNPVDHPHGGGEGRTGEGRVPVSPWGTPAKGYRTRNNKRTDNMIVRRRHSK.

Residues 223–275 are disordered; it reads VAMNPVDHPHGGGEGRTGEGRVPVSPWGTPAKGYRTRNNKRTDNMIVRRRHSK. The segment covering 229-241 has biased composition (basic and acidic residues); that stretch reads DHPHGGGEGRTGE.

The protein belongs to the universal ribosomal protein uL2 family. Part of the 50S ribosomal subunit. Forms a bridge to the 30S subunit in the 70S ribosome.

One of the primary rRNA binding proteins. Required for association of the 30S and 50S subunits to form the 70S ribosome, for tRNA binding and peptide bond formation. It has been suggested to have peptidyltransferase activity; this is somewhat controversial. Makes several contacts with the 16S rRNA in the 70S ribosome. This Laribacter hongkongensis (strain HLHK9) protein is Large ribosomal subunit protein uL2.